The sequence spans 465 residues: Putative multidrug resistance protein MdtD (465 aa).

Transmembrane regions (helical) follow at residues 12–32 (LWIVAFGFFMQTLDTTIVNTA), 49–69 (SVIVSYVLTVAVMLPASGWLA), 72–92 (IGVKWVFFSAIILFTFGSLMC), 138–158 (FVTLPGQIGPLVGPALGGFLV), 165–185 (WIFLINLPVGVIGALATLLLM), 195–215 (FDISGFIMLAIGMATLTLALD), 219–239 (GLGLSPLAIAGLILCGVIALG), 267–287 (LVGSMSARIGSGMLPFMTPIF), 290–310 (IGLGFSPFHAGLMMIPMIIGS), 329–351 (VLVNATLLLAVVSLSLPLVAIMG), 393–413 (LLSMAMQLSMSIGVSTAGILL), and 430–450 (SAFLYSYLCMAIIIALPALIF).

The protein belongs to the major facilitator superfamily. TCR/Tet family.

It is found in the cell inner membrane. The sequence is that of Putative multidrug resistance protein MdtD from Yersinia pseudotuberculosis serotype I (strain IP32953).